The primary structure comprises 109 residues: Sperm-specific class P protein 19 (109 aa).

Positions 1–109 (MSLTADPPAC…TVTIPMSATA (109 aa)) constitute an MSP domain.

Monomer. In terms of tissue distribution, expressed at higher level in testis.

This is Sperm-specific class P protein 19 (ssp-19) from Caenorhabditis elegans.